We begin with the raw amino-acid sequence, 332 residues long: D-glutamate N-acetyltransferase (332 aa).

This sequence belongs to the N-acetyltransferase DgcN family.

The enzyme catalyses D-glutamate + acetyl-CoA = N-acetyl-D-glutamate + CoA + H(+). It carries out the reaction D-aspartate + acetyl-CoA = N-acetyl-D-aspartate + CoA + H(+). It catalyses the reaction D-glutamine + acetyl-CoA = N-acetyl-D-glutamine + CoA + H(+). Its pathway is amino-acid degradation. In terms of biological role, N-acetyltransferase involved in a deamination-independent D-glutamate degradation pathway, named the DgcN-DgcA pathway. Catalyzes the transfer of the acetyl moiety from acetyl-CoA to D-glutamate to generate N-acetyl-D-glutamate. Can also acetylate D-aspartate and D-glutamine, with lower efficiency. Has low activity with D-asparagine. Cannot use succinyl-CoA. This Pseudoalteromonas sp protein is D-glutamate N-acetyltransferase.